A 622-amino-acid chain; its full sequence is Probable potassium transport system protein Kup (622 aa).

12 consecutive transmembrane segments (helical) span residues leucine 8–leucine 28, valine 50–valine 70, leucine 103–isoleucine 123, proline 137–valine 157, phenylalanine 169–valine 189, phenylalanine 215–leucine 235, tryptophan 247–leucine 267, alanine 285–isoleucine 305, isoleucine 337–phenylalanine 357, alanine 366–isoleucine 386, proline 393–glycine 413, and leucine 419–threonine 439.

It belongs to the HAK/KUP transporter (TC 2.A.72) family.

Its subcellular location is the cell inner membrane. It carries out the reaction K(+)(in) + H(+)(in) = K(+)(out) + H(+)(out). Functionally, transport of potassium into the cell. Likely operates as a K(+):H(+) symporter. The polypeptide is Probable potassium transport system protein Kup (Paracidovorax citrulli (strain AAC00-1) (Acidovorax citrulli)).